A 195-amino-acid chain; its full sequence is Putative deoxynucleoside kinase (195 aa).

This Frog virus 3 (isolate Goorha) (FV-3) protein is Putative deoxynucleoside kinase.